We begin with the raw amino-acid sequence, 675 residues long: DNA ligase (675 aa).

NAD(+) contacts are provided by residues 41 to 45 (DAEYD), 90 to 91 (SL), and glutamate 120. Lysine 122 (N6-AMP-lysine intermediate) is an active-site residue. Positions 143, 178, 295, and 319 each coordinate NAD(+). Zn(2+) contacts are provided by cysteine 413, cysteine 416, cysteine 431, and cysteine 436. Residues 596-675 (GVPQTFAGKT…ADFLQLIDRV (80 aa)) enclose the BRCT domain.

This sequence belongs to the NAD-dependent DNA ligase family. LigA subfamily. The cofactor is Mg(2+). It depends on Mn(2+) as a cofactor.

It carries out the reaction NAD(+) + (deoxyribonucleotide)n-3'-hydroxyl + 5'-phospho-(deoxyribonucleotide)m = (deoxyribonucleotide)n+m + AMP + beta-nicotinamide D-nucleotide.. DNA ligase that catalyzes the formation of phosphodiester linkages between 5'-phosphoryl and 3'-hydroxyl groups in double-stranded DNA using NAD as a coenzyme and as the energy source for the reaction. It is essential for DNA replication and repair of damaged DNA. This is DNA ligase from Heliobacterium modesticaldum (strain ATCC 51547 / Ice1).